A 256-amino-acid polypeptide reads, in one-letter code: Major prion protein (256 aa).

Positions 1-24 are cleaved as a signal peptide; sequence MVKSHIGSWILVLFVAMWSDVGLC. The interval 25-233 is interaction with GRB2, ERI3 and SYN1; it reads KKRPKPGGGW…ESQAYYQRGA (209 aa). A disordered region spans residues 28–110; the sequence is PKPGGGWNTG…QWNKPSKPKT (83 aa). A run of 5 repeats spans residues 54-62, 63-70, 71-78, 79-86, and 87-95. The interval 54-95 is 5 X 8 AA tandem repeats of P-H-G-G-G-W-G-Q; sequence PQGAGGWGQPHGGGWGQPHGGGWGQPHGGGWGQPHGGGGWGQ. A compositionally biased stretch (gly residues) spans 56 to 97; that stretch reads GAGGWGQPHGGGWGQPHGGGWGQPHGGGWGQPHGGGGWGQGG. 12 residues coordinate Cu(2+): H64, G65, G66, H72, G73, G74, H80, G81, G82, H88, G90, and G91. A disulfide bond links C182 and C217. N-linked (GlcNAc...) asparagine glycans are attached at residues N184 and N200. A233 carries the GPI-anchor amidated alanine lipid modification. Positions 234-256 are cleaved as a propeptide — removed in mature form; that stretch reads SVILFSSPPVILLISFLIFLIVG.

The protein belongs to the prion family. As to quaternary structure, monomer and homodimer. Has a tendency to aggregate into amyloid fibrils containing a cross-beta spine, formed by a steric zipper of superposed beta-strands. Soluble oligomers may represent an intermediate stage on the path to fibril formation. Copper binding may promote oligomerization. Interacts with GRB2, APP, ERI3/PRNPIP and SYN1. Mislocalized cytosolically exposed PrP interacts with MGRN1; this interaction alters MGRN1 subcellular location and causes lysosomal enlargement. Interacts with KIAA1191.

Its subcellular location is the cell membrane. It localises to the golgi apparatus. Its function is as follows. Its primary physiological function is unclear. Has cytoprotective activity against internal or environmental stresses. May play a role in neuronal development and synaptic plasticity. May be required for neuronal myelin sheath maintenance. May play a role in iron uptake and iron homeostasis. Soluble oligomers are toxic to cultured neuroblastoma cells and induce apoptosis (in vitro). Association with GPC1 (via its heparan sulfate chains) targets PRNP to lipid rafts. Also provides Cu(2+) or Zn(2+) for the ascorbate-mediated GPC1 deaminase degradation of its heparan sulfate side chains. This is Major prion protein (PRNP) from Moschus chrysogaster (Alpine musk deer).